Here is a 65-residue protein sequence, read N- to C-terminus: Large ribosomal subunit protein bL35 (65 aa).

This sequence belongs to the bacterial ribosomal protein bL35 family.

This chain is Large ribosomal subunit protein bL35, found in Pectobacterium atrosepticum (strain SCRI 1043 / ATCC BAA-672) (Erwinia carotovora subsp. atroseptica).